Consider the following 383-residue polypeptide: Succinyl-diaminopimelate desuccinylase (383 aa).

His-79 is a Zn(2+) binding site. The active site involves Asp-81. Asp-110 contacts Zn(2+). The active-site Proton acceptor is Glu-141. Positions 142, 170, and 355 each coordinate Zn(2+).

Belongs to the peptidase M20A family. DapE subfamily. As to quaternary structure, homodimer. The cofactor is Zn(2+). Co(2+) is required as a cofactor.

It carries out the reaction N-succinyl-(2S,6S)-2,6-diaminopimelate + H2O = (2S,6S)-2,6-diaminopimelate + succinate. It functions in the pathway amino-acid biosynthesis; L-lysine biosynthesis via DAP pathway; LL-2,6-diaminopimelate from (S)-tetrahydrodipicolinate (succinylase route): step 3/3. Its function is as follows. Catalyzes the hydrolysis of N-succinyl-L,L-diaminopimelic acid (SDAP), forming succinate and LL-2,6-diaminopimelate (DAP), an intermediate involved in the bacterial biosynthesis of lysine and meso-diaminopimelic acid, an essential component of bacterial cell walls. The chain is Succinyl-diaminopimelate desuccinylase from Helicobacter pylori (strain ATCC 700392 / 26695) (Campylobacter pylori).